The following is a 147-amino-acid chain: Transcriptional regulator MraZ (147 aa).

SpoVT-AbrB domains lie at 5 to 50 (AIAL…PLSA) and 79 to 122 (AQEE…SDAG).

Belongs to the MraZ family. In terms of assembly, forms oligomers.

It is found in the cytoplasm. The protein localises to the nucleoid. This chain is Transcriptional regulator MraZ, found in Aromatoleum aromaticum (strain DSM 19018 / LMG 30748 / EbN1) (Azoarcus sp. (strain EbN1)).